Here is a 134-residue protein sequence, read N- to C-terminus: Small ribosomal subunit protein uS11 (134 aa).

The protein belongs to the universal ribosomal protein uS11 family. As to quaternary structure, part of the 30S ribosomal subunit. Interacts with proteins S7 and S18. Binds to IF-3.

Its function is as follows. Located on the platform of the 30S subunit, it bridges several disparate RNA helices of the 16S rRNA. Forms part of the Shine-Dalgarno cleft in the 70S ribosome. This is Small ribosomal subunit protein uS11 from Variovorax paradoxus (strain S110).